The primary structure comprises 82 residues: Alpha-defensin 17 (82 aa).

The signal sequence occupies residues 1 to 8 (LLAFQVQA). A disordered region spans residues 1–43 (LLAFQVQADPIQNTDEETKTEEQPGEEDQAVSVSFGDPEGTSL). Positions 9–47 (DPIQNTDEETKTEEQPGEEDQAVSVSFGDPEGTSLQEES) are excised as a propeptide. Intrachain disulfides connect Cys-53–Cys-81, Cys-55–Cys-70, and Cys-60–Cys-80.

It belongs to the alpha-defensin family.

The protein resides in the secreted. Its function is as follows. Probably contributes to the antimicrobial barrier function of the small bowel mucosa. The sequence is that of Alpha-defensin 17 (Defa17) from Mus musculus (Mouse).